A 438-amino-acid polypeptide reads, in one-letter code: Glucosamine kinase (438 aa).

Residues K133, 186 to 188 (AYL), and D193 each bind ATP. Position 300 (D300) interacts with D-glucosamine. Residues Q305, D317, and D319 each coordinate Mg(2+). The short motif at 405-420 (QEVREYLYAVRHLPHW) is the Substrate specificity determinant motif element. E409 provides a ligand contact to D-glucosamine.

The protein belongs to the actinobacterial glucosamine kinase family. Monomer. Mg(2+) is required as a cofactor.

The enzyme catalyses D-glucosamine + ATP = D-glucosamine 6-phosphate + ADP + H(+). In terms of biological role, catalyzes the ATP-dependent phosphorylation of D-glucosamine (GlcN) to D-glucosamine 6-phosphate. May be involved in the phosphorylation of acquired extracellular GlcN derived from the hydrolysis of chitosan, i.e., in the incorporation of exogenous GlcN into the bacterial GlcNAc metabolism. To a lesser extent, is also active on glucose, but is unable to phosphorylate maltose, 18 other sugars and several aminoglycoside antibiotics. The chain is Glucosamine kinase from Streptacidiphilus jiangxiensis.